The following is a 291-amino-acid chain: uncharacterized protein (291 aa).

The next 4 membrane-spanning stretches (helical) occupy residues 13 to 33 (IILI…SITI), 84 to 104 (IVLF…IGII), 111 to 131 (LLHL…FIII), and 219 to 239 (LIYC…IYYL).

The protein localises to the cell membrane. This is an uncharacterized protein from Ureaplasma parvum serovar 3 (strain ATCC 700970).